The primary structure comprises 788 residues: Protocadherin beta-18 (788 aa).

The first 28 residues, 1–28, serve as a signal peptide directing secretion; it reads MEPGKGRAQPTRQVLLFFVFLGGSLVYS. Cadherin domains follow at residues 29–133, 134–242, 243–347, 348–452, and 453–562; these read ETWS…TPTF, LNNH…APEF, EKPV…PPEI, AMTS…APAF, and TQTS…SPFV. Residues 29–691 lie on the Extracellular side of the membrane; sequence ETWSYSIAEE…AQADSLTVYL (663 aa). N-linked (GlcNAc...) asparagine glycosylation is present at asparagine 169. Asparagine 419 and asparagine 437 each carry an N-linked (GlcNAc...) asparagine glycan. Residue asparagine 568 is glycosylated (N-linked (GlcNAc...) asparagine). The Cadherin 6 domain maps to 569–672; the sequence is GSAPCTELVP…LVDGFSQPYL (104 aa). Residues 692–712 form a helical membrane-spanning segment; that stretch reads VVALASVSSLFLFSVFLFVAV. Over 713-788 the chain is Cytoplasmic; that stretch reads RLCRRSRAAS…DSDMEKAPPF (76 aa).

It is found in the cell membrane. Potential calcium-dependent cell-adhesion protein. This is Protocadherin beta-18 (PCDHB18) from Pan troglodytes (Chimpanzee).